The primary structure comprises 105 residues: Large ribosomal subunit protein uL24 (105 aa).

Belongs to the universal ribosomal protein uL24 family. As to quaternary structure, part of the 50S ribosomal subunit.

In terms of biological role, one of two assembly initiator proteins, it binds directly to the 5'-end of the 23S rRNA, where it nucleates assembly of the 50S subunit. Functionally, one of the proteins that surrounds the polypeptide exit tunnel on the outside of the subunit. The polypeptide is Large ribosomal subunit protein uL24 (Wolbachia sp. subsp. Brugia malayi (strain TRS)).